The chain runs to 314 residues: MSFPAPKPKAPELPQKLQHKLECNQGAVRAVRFNVDGNYCMTCGSDKTLKLWNPHKGTLLKTYSGHGYEVLDTAGSYDNSQMCSCSSDKTVILWDVAQGQVVRKFRGHAGKVNCVQFNEEATVIMSGSIDSSIRCWDCRSRRPEAIQILDEAKDGISSIKISDHEILAGSVDGNLRRYDLRKGEMCADYLGSPITCVSFSQDSQCLLASSLDSTLRLLDKDTGELLGEYTGHQNHSYKLDSCLSEKDTHVLSCSEDGTVCFWDLVEGSLVLKLPVGKAAVQSLSFHPSECCLLTASEGGVQLWRGASYEEEGGS.

7 WD repeats span residues C23–T62, G65–K104, G107–I146, E151–D188, Y189–E228, G231–K272, and V275–G313.

This sequence belongs to the WD repeat MORG1 family.

It localises to the cytoplasm. In terms of biological role, molecular scaffold protein for various multimeric protein complexes. Acts as a module in the assembly of a multicomponent scaffold for the ERK pathway, linking ERK responses to specific agonists. Also involved in response to hypoxia by acting as a negative regulator of HIF1A/HIF-1-alpha. This chain is WD repeat domain-containing protein 83 (wdr83), found in Xenopus tropicalis (Western clawed frog).